The sequence spans 317 residues: Transaldolase (317 aa).

Lys132 acts as the Schiff-base intermediate with substrate in catalysis.

The protein belongs to the transaldolase family. Type 1 subfamily. Homodimer.

The protein localises to the cytoplasm. The catalysed reaction is D-sedoheptulose 7-phosphate + D-glyceraldehyde 3-phosphate = D-erythrose 4-phosphate + beta-D-fructose 6-phosphate. Its pathway is carbohydrate degradation; pentose phosphate pathway; D-glyceraldehyde 3-phosphate and beta-D-fructose 6-phosphate from D-ribose 5-phosphate and D-xylulose 5-phosphate (non-oxidative stage): step 2/3. In terms of biological role, transaldolase is important for the balance of metabolites in the pentose-phosphate pathway. This Mannheimia succiniciproducens (strain KCTC 0769BP / MBEL55E) protein is Transaldolase.